Here is a 100-residue protein sequence, read N- to C-terminus: UPF0213 protein CKO_04549 (100 aa).

In terms of domain architecture, GIY-YIG spans 2–77; sequence TPWYLYLIRT…KRLTKRQKER (76 aa).

It belongs to the UPF0213 family.

This chain is UPF0213 protein CKO_04549, found in Citrobacter koseri (strain ATCC BAA-895 / CDC 4225-83 / SGSC4696).